A 297-amino-acid chain; its full sequence is Protein-L-isoaspartate O-methyltransferase (297 aa).

A disordered region spans residues 20–57 (RKPAPARTAGMPAVGAPGPAQAQAKARDKQPSAPTAAA). The segment covering 28–43 (AGMPAVGAPGPAQAQA) has biased composition (low complexity). Serine 133 is an active-site residue.

It belongs to the methyltransferase superfamily. L-isoaspartyl/D-aspartyl protein methyltransferase family.

The protein localises to the cytoplasm. It catalyses the reaction [protein]-L-isoaspartate + S-adenosyl-L-methionine = [protein]-L-isoaspartate alpha-methyl ester + S-adenosyl-L-homocysteine. Catalyzes the methyl esterification of L-isoaspartyl residues in peptides and proteins that result from spontaneous decomposition of normal L-aspartyl and L-asparaginyl residues. It plays a role in the repair and/or degradation of damaged proteins. In Cupriavidus pinatubonensis (strain JMP 134 / LMG 1197) (Cupriavidus necator (strain JMP 134)), this protein is Protein-L-isoaspartate O-methyltransferase.